Here is a 516-residue protein sequence, read N- to C-terminus: Maturase K (516 aa).

The protein belongs to the intron maturase 2 family. MatK subfamily.

The protein resides in the plastid. It localises to the chloroplast. Its function is as follows. Usually encoded in the trnK tRNA gene intron. Probably assists in splicing its own and other chloroplast group II introns. The protein is Maturase K of Medeola virginiana (Indian cucumber root).